The sequence spans 298 residues: Lipoyl synthase (298 aa).

The [4Fe-4S] cluster site is built by C40, C45, C51, C67, C71, C74, and S280. Positions 53-269 constitute a Radical SAM core domain; sequence AVRRTATFMI…KEIAMQKGFS (217 aa).

Belongs to the radical SAM superfamily. Lipoyl synthase family. It depends on [4Fe-4S] cluster as a cofactor.

Its subcellular location is the cytoplasm. It carries out the reaction [[Fe-S] cluster scaffold protein carrying a second [4Fe-4S](2+) cluster] + N(6)-octanoyl-L-lysyl-[protein] + 2 oxidized [2Fe-2S]-[ferredoxin] + 2 S-adenosyl-L-methionine + 4 H(+) = [[Fe-S] cluster scaffold protein] + N(6)-[(R)-dihydrolipoyl]-L-lysyl-[protein] + 4 Fe(3+) + 2 hydrogen sulfide + 2 5'-deoxyadenosine + 2 L-methionine + 2 reduced [2Fe-2S]-[ferredoxin]. It functions in the pathway protein modification; protein lipoylation via endogenous pathway; protein N(6)-(lipoyl)lysine from octanoyl-[acyl-carrier-protein]. Its function is as follows. Catalyzes the radical-mediated insertion of two sulfur atoms into the C-6 and C-8 positions of the octanoyl moiety bound to the lipoyl domains of lipoate-dependent enzymes, thereby converting the octanoylated domains into lipoylated derivatives. This is Lipoyl synthase from Bacillus velezensis (strain DSM 23117 / BGSC 10A6 / LMG 26770 / FZB42) (Bacillus amyloliquefaciens subsp. plantarum).